The primary structure comprises 386 residues: 5-hydroxytryptamine receptor 1B (386 aa).

Residues 1 to 42 are Extracellular-facing; that stretch reads MEEQGIQCAPPPPAASQTGVPLTNLSHNCSADGYIYQDSIAL. 2 N-linked (GlcNAc...) asparagine glycosylation sites follow: asparagine 24 and asparagine 28. A helical membrane pass occupies residues 43–68; sequence PWKVLLVALLALITLATTLSNAFVIA. Topologically, residues 69–82 are cytoplasmic; it reads TVYRTRKLHTPANY. The helical transmembrane segment at 83–107 threads the bilayer; that stretch reads LIASLAVTDLLVSILVMPISTMYTV. Residues 108–115 lie on the Extracellular side of the membrane; the sequence is TGRWTLGQ. The chain crosses the membrane as a helical span at residues 116 to 141; it reads VVCDFWLSSDITCCTASIMHLCVIAL. A disulfide bridge links cysteine 118 with cysteine 195. Aspartate 125 and threonine 130 together coordinate ergotamine. The DRY motif; important for ligand-induced conformation changes and signaling motif lies at 142-144; it reads DRY. The Cytoplasmic segment spans residues 142–161; that stretch reads DRYWAITDAVEYSAKRTPKR. The chain crosses the membrane as a helical span at residues 162 to 180; the sequence is AAIMIVLVWVFSISISLPP. Topologically, residues 181-201 are extracellular; sequence FFWRQAKAEEEMLDCFVNTDH. Valine 197 provides a ligand contact to ergotamine. Residues 202 to 225 traverse the membrane as a helical segment; it reads VLYTVYSTVGAFYLPTLLLIALYG. The Cytoplasmic portion of the chain corresponds to 226–311; it reads RIYVEARSRI…AARERKATKT (86 aa). Over residues 255–268 the composition is skewed to polar residues; the sequence is DSPGSTSSVTSINS. The segment at 255-278 is disordered; that stretch reads DSPGSTSSVTSINSRAPDVPSESG. The chain crosses the membrane as a helical span at residues 312–333; that stretch reads LGIILGAFIVCWLPFFIISLVM. Over 334–343 the chain is Extracellular; that stretch reads PICKDACWFH. The chain crosses the membrane as a helical span at residues 344–366; it reads MAIFDFFNWLGYLNSLINPIIYT. The NPxxY motif; important for ligand-induced conformation changes and signaling signature appears at 361 to 365; that stretch reads NPIIY. The Cytoplasmic portion of the chain corresponds to 367–386; sequence MSNEDFKQAFHKLIRFKCAG. Cysteine 384 carries S-palmitoyl cysteine lipidation.

This sequence belongs to the G-protein coupled receptor 1 family. In terms of assembly, homodimer. Heterodimer with HTR1D. Post-translationally, phosphorylated. Desensitization of the receptor may be mediated by its phosphorylation. Palmitoylated. As to expression, predominantly expressed in striatum and Purkinje cells.

The protein localises to the cell membrane. G-protein coupled receptor for 5-hydroxytryptamine (serotonin). Also functions as a receptor for ergot alkaloid derivatives, various anxiolytic and antidepressant drugs and other psychoactive substances, such as lysergic acid diethylamide (LSD). Ligand binding causes a conformation change that triggers signaling via guanine nucleotide-binding proteins (G proteins) and modulates the activity of downstream effectors, such as adenylate cyclase. HTR1B is coupled to G(i)/G(o) G alpha proteins and mediates inhibitory neurotransmission by inhibiting adenylate cyclase activity. Arrestin family members inhibit signaling via G proteins and mediate activation of alternative signaling pathways. Regulates the release of 5-hydroxytryptamine, dopamine and acetylcholine in the brain, and thereby affects neural activity, nociceptive processing, pain perception, mood and behavior. Besides, plays a role in vasoconstriction of cerebral arteries. This is 5-hydroxytryptamine receptor 1B (Htr1b) from Mus musculus (Mouse).